A 127-amino-acid chain; its full sequence is Ribosome-binding factor A (127 aa).

It belongs to the RbfA family. As to quaternary structure, monomer. Binds 30S ribosomal subunits, but not 50S ribosomal subunits or 70S ribosomes.

The protein resides in the cytoplasm. Its function is as follows. One of several proteins that assist in the late maturation steps of the functional core of the 30S ribosomal subunit. Associates with free 30S ribosomal subunits (but not with 30S subunits that are part of 70S ribosomes or polysomes). Required for efficient processing of 16S rRNA. May interact with the 5'-terminal helix region of 16S rRNA. This Nitrosococcus oceani (strain ATCC 19707 / BCRC 17464 / JCM 30415 / NCIMB 11848 / C-107) protein is Ribosome-binding factor A.